The primary structure comprises 29 residues: Cytochrome b6-f complex subunit 8 (29 aa).

A helical membrane pass occupies residues 3–23; it reads TVSIAWAALMVIFTFSISLVV.

Belongs to the PetN family. In terms of assembly, the 4 large subunits of the cytochrome b6-f complex are cytochrome b6, subunit IV (17 kDa polypeptide, PetD), cytochrome f and the Rieske protein, while the 4 small subunits are PetG, PetL, PetM and PetN. The complex functions as a dimer.

Its subcellular location is the plastid. It localises to the chloroplast thylakoid membrane. Functionally, component of the cytochrome b6-f complex, which mediates electron transfer between photosystem II (PSII) and photosystem I (PSI), cyclic electron flow around PSI, and state transitions. The sequence is that of Cytochrome b6-f complex subunit 8 from Psilotum nudum (Whisk fern).